The following is a 743-amino-acid chain: UvrABC system protein C (743 aa).

The GIY-YIG domain occupies 16–95 (VDPGVYKFRD…IKEFDPRFNV (80 aa)). The region spanning 208–243 (DKLVRQLEARMQQASEELDFETAARLRDDVGALRRA) is the UVR domain. 2 disordered regions span residues 497–543 (AEAA…QTGR) and 694–743 (PSAD…TGVE). Residues 506–520 (QASDTDGDQVSDTDG) show a composition bias toward acidic residues. A compositionally biased stretch (polar residues) spans 734–743 (QSASQRTGVE).

This sequence belongs to the UvrC family. Interacts with UvrB in an incision complex.

It localises to the cytoplasm. The UvrABC repair system catalyzes the recognition and processing of DNA lesions. UvrC both incises the 5' and 3' sides of the lesion. The N-terminal half is responsible for the 3' incision and the C-terminal half is responsible for the 5' incision. This Rhodococcus opacus (strain B4) protein is UvrABC system protein C.